The primary structure comprises 124 residues: Small ribosomal subunit protein uS12 (124 aa).

Residue Asp-89 is modified to 3-methylthioaspartic acid.

This sequence belongs to the universal ribosomal protein uS12 family. In terms of assembly, part of the 30S ribosomal subunit. Contacts proteins S8 and S17. May interact with IF1 in the 30S initiation complex.

Functionally, with S4 and S5 plays an important role in translational accuracy. In terms of biological role, interacts with and stabilizes bases of the 16S rRNA that are involved in tRNA selection in the A site and with the mRNA backbone. Located at the interface of the 30S and 50S subunits, it traverses the body of the 30S subunit contacting proteins on the other side and probably holding the rRNA structure together. The combined cluster of proteins S8, S12 and S17 appears to hold together the shoulder and platform of the 30S subunit. The protein is Small ribosomal subunit protein uS12 of Shewanella sp. (strain ANA-3).